The chain runs to 398 residues: Argininosuccinate lyase (398 aa).

This sequence belongs to the lyase 1 family. Argininosuccinate lyase subfamily.

Its subcellular location is the cytoplasm. It catalyses the reaction 2-(N(omega)-L-arginino)succinate = fumarate + L-arginine. It participates in amino-acid biosynthesis; L-arginine biosynthesis; L-arginine from L-ornithine and carbamoyl phosphate: step 3/3. This chain is Argininosuccinate lyase, found in Thermotoga neapolitana (strain ATCC 49049 / DSM 4359 / NBRC 107923 / NS-E).